The primary structure comprises 446 residues: tRNA(Ile2) 2-agmatinylcytidine synthetase TiaS (446 aa).

The protein belongs to the TiaS family.

The protein localises to the cytoplasm. The catalysed reaction is cytidine(34) in tRNA(Ile2) + agmatine + ATP + H2O = 2-agmatinylcytidine(34) in tRNA(Ile2) + AMP + 2 phosphate + 2 H(+). In terms of biological role, ATP-dependent agmatine transferase that catalyzes the formation of 2-agmatinylcytidine (agm2C) at the wobble position (C34) of tRNA(Ile2), converting the codon specificity from AUG to AUA. This chain is tRNA(Ile2) 2-agmatinylcytidine synthetase TiaS, found in Cenarchaeum symbiosum (strain A).